Here is a 68-residue protein sequence, read N- to C-terminus: Small ribosomal subunit protein bS21 (68 aa).

It belongs to the bacterial ribosomal protein bS21 family.

The protein is Small ribosomal subunit protein bS21 of Dinoroseobacter shibae (strain DSM 16493 / NCIMB 14021 / DFL 12).